A 145-amino-acid chain; its full sequence is D-aminoacyl-tRNA deacylase (145 aa).

The Gly-cisPro motif, important for rejection of L-amino acids signature appears at 137–138 (GP).

The protein belongs to the DTD family. As to quaternary structure, homodimer.

It is found in the cytoplasm. It catalyses the reaction glycyl-tRNA(Ala) + H2O = tRNA(Ala) + glycine + H(+). The enzyme catalyses a D-aminoacyl-tRNA + H2O = a tRNA + a D-alpha-amino acid + H(+). In terms of biological role, an aminoacyl-tRNA editing enzyme that deacylates mischarged D-aminoacyl-tRNAs. Also deacylates mischarged glycyl-tRNA(Ala), protecting cells against glycine mischarging by AlaRS. Acts via tRNA-based rather than protein-based catalysis; rejects L-amino acids rather than detecting D-amino acids in the active site. By recycling D-aminoacyl-tRNA to D-amino acids and free tRNA molecules, this enzyme counteracts the toxicity associated with the formation of D-aminoacyl-tRNA entities in vivo and helps enforce protein L-homochirality. The sequence is that of D-aminoacyl-tRNA deacylase from Shewanella halifaxensis (strain HAW-EB4).